A 465-amino-acid polypeptide reads, in one-letter code: 2-methylcitrate synthase, mitochondrial (465 aa).

Residues 1 to 29 (MAMTMRSTRHASKLAQTARLALTNSRRYS) constitute a mitochondrion transit peptide. 2 residues coordinate CoA: Arg74 and Lys192. His269 contributes to the oxaloacetate binding site. CoA is bound at residue Leu304. His305 is an active-site residue. 3 residues coordinate CoA: Val346, Gly348, and Tyr349. Oxaloacetate contacts are provided by His351 and Arg360. His351 is a catalytic residue. Residues Thr400, Lys401, and Asn406 each contribute to the CoA site. Asp408 is a catalytic residue. Residues Arg434 and Arg454 each contribute to the oxaloacetate site.

The protein belongs to the citrate synthase family. In terms of assembly, homodimer.

The protein resides in the mitochondrion matrix. The enzyme catalyses propanoyl-CoA + oxaloacetate + H2O = (2S,3S)-2-methylcitrate + CoA + H(+). It catalyses the reaction oxaloacetate + acetyl-CoA + H2O = citrate + CoA + H(+). Its pathway is organic acid metabolism; propanoate degradation. Its function is as follows. Component of the methylcitrate cycle that catalyzes the synthesis of (2S,3S)-2-methylcitrate from propionyl-CoA and oxaloacetate. Plays an important role in detoxification of propionyl-CoA, an inhibitor of both primary and secondary metabolism. Also has citrate synthase activity using as substrates acetyl-CoA and oxaloacetate. Plays a key role in the estabishment of invasive pulmonary aspergillosis. This chain is 2-methylcitrate synthase, mitochondrial, found in Aspergillus fumigatus (strain CBS 144.89 / FGSC A1163 / CEA10) (Neosartorya fumigata).